The primary structure comprises 495 residues: Aspartyl/glutamyl-tRNA(Asn/Gln) amidotransferase subunit B (495 aa).

It belongs to the GatB/GatE family. GatB subfamily. Heterotrimer of A, B and C subunits.

The catalysed reaction is L-glutamyl-tRNA(Gln) + L-glutamine + ATP + H2O = L-glutaminyl-tRNA(Gln) + L-glutamate + ADP + phosphate + H(+). It carries out the reaction L-aspartyl-tRNA(Asn) + L-glutamine + ATP + H2O = L-asparaginyl-tRNA(Asn) + L-glutamate + ADP + phosphate + 2 H(+). Allows the formation of correctly charged Asn-tRNA(Asn) or Gln-tRNA(Gln) through the transamidation of misacylated Asp-tRNA(Asn) or Glu-tRNA(Gln) in organisms which lack either or both of asparaginyl-tRNA or glutaminyl-tRNA synthetases. The reaction takes place in the presence of glutamine and ATP through an activated phospho-Asp-tRNA(Asn) or phospho-Glu-tRNA(Gln). The protein is Aspartyl/glutamyl-tRNA(Asn/Gln) amidotransferase subunit B of Acinetobacter baylyi (strain ATCC 33305 / BD413 / ADP1).